The sequence spans 480 residues: Adenosylhomocysteinase (480 aa).

Substrate-binding residues include Thr63, Asp142, and Glu203. 204 to 206 contributes to the NAD(+) binding site; the sequence is TTT. Lys233 and Asp237 together coordinate substrate. NAD(+) contacts are provided by residues Asn238, 267–272, Glu290, Asn325, 346–348, and Asn394; these read GYGDVG and IGH.

This sequence belongs to the adenosylhomocysteinase family. NAD(+) serves as cofactor.

Its subcellular location is the cytoplasm. The catalysed reaction is S-adenosyl-L-homocysteine + H2O = L-homocysteine + adenosine. It functions in the pathway amino-acid biosynthesis; L-homocysteine biosynthesis; L-homocysteine from S-adenosyl-L-homocysteine: step 1/1. May play a key role in the regulation of the intracellular concentration of adenosylhomocysteine. The protein is Adenosylhomocysteinase of Xylella fastidiosa (strain Temecula1 / ATCC 700964).